The chain runs to 467 residues: Ribulose bisphosphate carboxylase large chain (467 aa).

Lys-5 is subject to N6,N6,N6-trimethyllysine. Residues Asn-114 and Thr-164 each contribute to the substrate site. The Proton acceptor role is filled by Lys-166. Residue Lys-168 participates in substrate binding. Lys-192, Asp-194, and Glu-195 together coordinate Mg(2+). Lys-192 is subject to N6-carboxylysine. His-285 serves as the catalytic Proton acceptor. Substrate-binding residues include Arg-286, His-318, and Ser-370.

This sequence belongs to the RuBisCO large chain family. Type I subfamily. Heterohexadecamer of 8 large chains and 8 small chains; disulfide-linked. The disulfide link is formed within the large subunit homodimers. The cofactor is Mg(2+). The disulfide bond which can form in the large chain dimeric partners within the hexadecamer appears to be associated with oxidative stress and protein turnover.

It is found in the plastid. Its subcellular location is the chloroplast. It catalyses the reaction 2 (2R)-3-phosphoglycerate + 2 H(+) = D-ribulose 1,5-bisphosphate + CO2 + H2O. The catalysed reaction is D-ribulose 1,5-bisphosphate + O2 = 2-phosphoglycolate + (2R)-3-phosphoglycerate + 2 H(+). Functionally, ruBisCO catalyzes two reactions: the carboxylation of D-ribulose 1,5-bisphosphate, the primary event in carbon dioxide fixation, as well as the oxidative fragmentation of the pentose substrate in the photorespiration process. Both reactions occur simultaneously and in competition at the same active site. This is Ribulose bisphosphate carboxylase large chain from Tasmannia insipida (Pepperbush).